The sequence spans 251 residues: CDP-diacylglycerol pyrophosphatase (251 aa).

The chain crosses the membrane as a helical span at residues 5-25; that stretch reads GYFLLAVIVIVAAAGVGYWKF.

The protein belongs to the Cdh family.

The protein localises to the cell inner membrane. The catalysed reaction is a CDP-1,2-diacyl-sn-glycerol + H2O = a 1,2-diacyl-sn-glycero-3-phosphate + CMP + 2 H(+). Its pathway is phospholipid metabolism; CDP-diacylglycerol degradation; phosphatidate from CDP-diacylglycerol: step 1/1. The sequence is that of CDP-diacylglycerol pyrophosphatase from Salmonella typhi.